Reading from the N-terminus, the 518-residue chain is Probable G-protein coupled receptor Mth-like 2 (518 aa).

Residues 1-26 form the signal peptide; it reads MIASSKMLLSASILIYFLLNLQSSSA. The Extracellular portion of the chain corresponds to 27–220; the sequence is EIADCSFYDT…CLILPSRTGQ (194 aa). 5 cysteine pairs are disulfide-bonded: Cys31–Cys85, Cys87–Cys92, Cys96–Cys190, Cys97–Cys108, and Cys152–Cys211. Asn47 carries N-linked (GlcNAc...) asparagine glycosylation. 3 N-linked (GlcNAc...) asparagine glycosylation sites follow: Asn111, Asn125, and Asn201. The chain crosses the membrane as a helical span at residues 221 to 241; the sequence is TVVMITSLICLVLTIAVYLCV. The Cytoplasmic portion of the chain corresponds to 242–250; sequence KKLMNLEGK. Residues 251–271 traverse the membrane as a helical segment; it reads CFICYMMCLFFGYLFLLLDLW. Residues 272–279 lie on the Extracellular side of the membrane; it reads ELSLDFCK. The chain crosses the membrane as a helical span at residues 280–300; that stretch reads AAGFLGYFFVMAAFFWLSIIS. Over 301-321 the chain is Cytoplasmic; it reads RHYWKCLTNPCASMNIRSERA. Residues 322-342 traverse the membrane as a helical segment; it reads FLLYSCFAWAMPLALTGVTYL. Residues 343 to 371 are Extracellular-facing; that stretch reads ADNVVNNEEWQPRVGDEGHCWIYTKSWSA. Residues 372-392 form a helical membrane-spanning segment; sequence MVYFYGPMVLLILFNITMFVL. Topologically, residues 393–426 are cytoplasmic; the sequence is TAKHIIDSKRTLRKIARNEGRIQKLNSDKQNYTQ. The chain crosses the membrane as a helical span at residues 427–447; that stretch reads FLLLFTVMGMSWSFEIFSYLV. The Extracellular segment spans residues 448–455; it reads QREKLWVN. Residues 456-476 form a helical membrane-spanning segment; the sequence is IFLVADYFNWSQGVIIFVLFI. Topologically, residues 477 to 518 are cytoplasmic; sequence LRRKTLVLFKKQIFPKQRAFSRSATQSTIESISQTKRHFNMT.

The protein belongs to the G-protein coupled receptor 2 family. Mth subfamily.

The protein resides in the cell membrane. This is Probable G-protein coupled receptor Mth-like 2 (mthl2) from Drosophila melanogaster (Fruit fly).